The chain runs to 100 residues: RxLR effector protein Avrblb2 (100 aa).

A signal peptide spans 1-22 (MRSFLYGVLAFAVLARSSAVAA). Residues 43–57 (RSLRIEAQEVIQSGR) carry the RxLR-dEER motif. The Calmodulin-binding motif motif lies at 78-82 (RPDIK).

This sequence belongs to the RxLR effector family. In terms of assembly, interacts with the host papain-like cysteine protease C14. Interacts with the host calmodulin.

Its subcellular location is the secreted. It localises to the host cell membrane. Secreted effector that acts as an elicitor of hypersensitive response (HR) specifically on plants carrying defense protein Rpi-blb2. Enhances P.infestans colonization of Nicotiana benthamiana leaves. Interacts with, and subsequently prevents secretion into the apoplast of the host papain-like cysteine protease C14, thus promoting virulence by interfering with the execution of host defenses. Associates with calmodulin at the host plasma membrane to interfere with plant defense-associated calcium signaling in hosts. This Phytophthora infestans (strain T30-4) (Potato late blight agent) protein is RxLR effector protein Avrblb2.